Reading from the N-terminus, the 134-residue chain is Putative toxin MJ0605 (134 aa).

It belongs to the UPF0332 family.

Functionally, putative toxin component of a putative type VII toxin-antitoxin (TA) system. Its cognate antitoxin might be MJ0604. The protein is Putative toxin MJ0605 of Methanocaldococcus jannaschii (strain ATCC 43067 / DSM 2661 / JAL-1 / JCM 10045 / NBRC 100440) (Methanococcus jannaschii).